Reading from the N-terminus, the 162-residue chain is Protein S40-4 (162 aa).

The protein belongs to the senescence regulator S40 family.

It is found in the cytoplasm. This is Protein S40-4 from Arabidopsis thaliana (Mouse-ear cress).